Here is a 369-residue protein sequence, read N- to C-terminus: Phenylalanine--tRNA ligase alpha subunit (369 aa).

Glutamate 269 lines the Mg(2+) pocket.

It belongs to the class-II aminoacyl-tRNA synthetase family. Phe-tRNA synthetase alpha subunit type 1 subfamily. Tetramer of two alpha and two beta subunits. The cofactor is Mg(2+).

Its subcellular location is the cytoplasm. The enzyme catalyses tRNA(Phe) + L-phenylalanine + ATP = L-phenylalanyl-tRNA(Phe) + AMP + diphosphate + H(+). This Brucella abortus (strain 2308) protein is Phenylalanine--tRNA ligase alpha subunit.